The following is a 371-amino-acid chain: MICLTPMVSLPLVTTTDSESTGPRKNHLLNWSLDQLKDWLQEQGQKPFRAKQIRRWLFSGRATSFEEMTDLPAKLRAQLEEHFAIFNATEAVVSKSKDGTEKILVRLADGGEVECVLLRDGPRRSICVSSQVGCAMGCVFCASGLDGVDRNLTGGEILEQMLRLQQRLPADERLSHIVMMGMGEPLANLPGVLSALDVARSEDGLGISPRRITISTVGLPPAIDKLAAAGIPYNLAVSLHAPNDELRSELVPVNRKIGIEPVLQAADRYFHASGRRLTFEYVLLGGINDGDEHARQLSQILRGRSVMMNVIPYNPVAGLPYRTPSGAAIARFRAILESAGVNVNFRQRKGDEINAACGQLRRNRGEVKATK.

Glu-114 (proton acceptor) is an active-site residue. Residues 120 to 346 (DGPRRSICVS…ESAGVNVNFR (227 aa)) enclose the Radical SAM core domain. A disulfide bridge connects residues Cys-127 and Cys-357. [4Fe-4S] cluster is bound by residues Cys-134, Cys-138, and Cys-141. S-adenosyl-L-methionine contacts are provided by residues 183–184 (GE), Ser-215, 238–240 (SLH), and Asn-314. Cys-357 acts as the S-methylcysteine intermediate in catalysis.

The protein belongs to the radical SAM superfamily. RlmN family. Requires [4Fe-4S] cluster as cofactor.

Its subcellular location is the cytoplasm. The enzyme catalyses adenosine(2503) in 23S rRNA + 2 reduced [2Fe-2S]-[ferredoxin] + 2 S-adenosyl-L-methionine = 2-methyladenosine(2503) in 23S rRNA + 5'-deoxyadenosine + L-methionine + 2 oxidized [2Fe-2S]-[ferredoxin] + S-adenosyl-L-homocysteine. It catalyses the reaction adenosine(37) in tRNA + 2 reduced [2Fe-2S]-[ferredoxin] + 2 S-adenosyl-L-methionine = 2-methyladenosine(37) in tRNA + 5'-deoxyadenosine + L-methionine + 2 oxidized [2Fe-2S]-[ferredoxin] + S-adenosyl-L-homocysteine. In terms of biological role, specifically methylates position 2 of adenine 2503 in 23S rRNA and position 2 of adenine 37 in tRNAs. The protein is Probable dual-specificity RNA methyltransferase RlmN of Rhodopirellula baltica (strain DSM 10527 / NCIMB 13988 / SH1).